The sequence spans 619 residues: DEAD-box ATP-dependent RNA helicase 35B (619 aa).

Low complexity-rich tracts occupy residues 1–10 (MAAAAAAAAA) and 49–58 (PPTTNAVAVA). The segment at 1 to 72 (MAAAAAAAAA…PPRSTSSPAV (72 aa)) is disordered. The Q motif motif lies at 173–201 (RSFGDLRLPEPILRALRGKGIEKPTPIQV). Residues 204-388 (LPVALSGRDM…KSALVKPIIV (185 aa)) form the Helicase ATP-binding domain. Position 217–224 (217–224 (AFTGSGKT)) interacts with ATP. Residues 336 to 339 (DEAD) carry the DEAD box motif. Positions 399-559 (DVIQEVEYVK…RLPPILADLD (161 aa)) constitute a Helicase C-terminal domain. Residues 576 to 593 (KGCAFCGGLGHRIEACPK) form a CCHC-type zinc finger.

Belongs to the DEAD box helicase family. DDX41 subfamily.

It carries out the reaction ATP + H2O = ADP + phosphate + H(+). This is DEAD-box ATP-dependent RNA helicase 35B from Oryza sativa subsp. japonica (Rice).